A 344-amino-acid polypeptide reads, in one-letter code: Eukaryotic translation initiation factor 2 subunit alpha (344 aa).

Residues 21 to 92 (DMAVMIQVKT…ERGYIDLSKR (72 aa)) form the S1 motif domain. The residue at position 56 (S56) is a Phosphoserine; by GCN2. The segment at 309 to 344 (LRMDNEEMSGDEGSEDEEEDTGMGEVDIDGGSGIIE) is disordered. Positions 314–336 (EEMSGDEGSEDEEEDTGMGEVDI) are enriched in acidic residues. A phosphoserine; by CK2 mark is found at S317 and S322.

It belongs to the eIF-2-alpha family. In terms of assembly, eukaryotic translation initiation factor 2 eIF2 is a heterotrimeric complex composed of an alpha, a beta and a gamma subunit. Phosphorylated at Ser-56 by GCN2. Phosphorylated at Ser-317 and Ser-322 by CK2.

The protein resides in the cytoplasm. The protein localises to the cytosol. Functionally, functions in the early steps of protein synthesis by forming a ternary complex with GTP and initiator tRNA. This complex binds to a 40S ribosomal subunit, followed by mRNA binding to form a 43S pre-initiation complex. Junction of the 60S ribosomal subunit to form the 80S initiation complex is preceded by hydrolysis of the GTP bound to eIF-2 and release of an eIF-2-GDP binary complex. In order for eIF-2 to recycle and catalyze another round of initiation, the GDP bound to eIF-2 must exchange with GTP by way of a reaction catalyzed by eIF2B. This chain is Eukaryotic translation initiation factor 2 subunit alpha, found in Arabidopsis thaliana (Mouse-ear cress).